The primary structure comprises 1383 residues: MAQTLAMMSQFNGRKRVRKFFGKIPEVAEMPNLIEVQKASYDQFLMIKEPKGGRPDEGLQAVFKSVFPISDFSGTAMLEFVRYEFDAPKFDVEECRQRDLTYAAPLKVILRLIVFDIDEDTGSKDIKDIKEQGVYMGDMPLMTSNGTFIINGTERVIVSQMHRSPGVFFDHDKGKSHSSGKVLFAARVIPYRGSWLDIEFDAKDIVYARIDRRRKIPVTSFLMALGMDASDILSTFYNKVTYERVESGWRIPYSVDRFKGVKLVSDLVDAESGEVVAEAGKKLTARTAKLLVEKGLKAIRVSEDELLGSYLADDIVNYETGEIYLEAGDEIDEKVLKVLFDVGANQINILDIDHMSVGAYIRNTLKVDKNESRQDALFDIYRVMRPGEPPTIDTAEAMFHSLFFDSERYDLSAVGRVKMNLRMGLDCPDTVRVLRQEDIIGVVKMLVELRDGRGEIDDIDNLGNRRVRSVGELMENQYRVGLLRMERAIKERMSSVEIDTVMPQDLINAKPAAAAVREFFGSSQLSQFMDQTNPLSEITHKRRLSALGPGGLTRERAGFEVRDVHPTHYGRICPIETPEGPNIGLINSLATFARVNKYGFIESPYRKITDGKVTTEVVYLSAMEEAKHYVAQANSSLDSEGRFTEEFVVCRHAGEVLMVPRDHIDLMDVSPKQLVSVAASLIPFLENDDANRALMGSNMQRQAVPLIRSEAPFVGTGMEAIVARDSGAAISAKRGGIVDQVDATRIVIRATEDLDPSKSGVDIYRLQKFQRSNQSTCINQRPLVHVGDRIEKGDIIADGPSTDLGDLALGRNVLVAFMPWNGYNYEDSILLSERIVADDVFTSIHIEEFEVAARDMKLGPEEITRDIPNVAEEALRNLDEAGIVYIGAEVQPGDILVGKITPKGESPMTPEEKLLRAIFGEKASDVRDTSMRMPPGTFGTVVEVRVFNRHGVEKDERAMEIEREEIERLAKDRDDEQSILDRNVYARLAGMLKDKSAIRGPKGFEKGQKIDSTVLNNYPRSQWWQFAVDDEKVQNKIEALCNQYDESKEALQRRFMDKVEKVQRGDEMPPGVMKMVKVFVAVKRKIQPGDKMAGRHGNKGVVSRILPVEDMPFLEDGTHADIVLNPLGVPSRMNVGQILETHLGWACAGMGKKIGDLVDFYQETGDILPLRQRIENLIPDNDRNEPVRQYDDESLVKLAHQMRKGVSIATPVFDGAHEADINAMLEDAGLDSSGQVTLYDGRTGEPFDRQVTVGYIYMLKLHHLVDDKIHARSIGPYSLVTQQPLGGKAQFGGQRFGEMEVWALEAYGAAYTLQEMLTVKSDDVAGRTKVYEAIVRGDDTFEASIPESFNVLIKEMRSLGLNVKLGDAREFMAQQALPEVVEN.

Belongs to the RNA polymerase beta chain family. The RNAP catalytic core consists of 2 alpha, 1 beta, 1 beta' and 1 omega subunit. When a sigma factor is associated with the core the holoenzyme is formed, which can initiate transcription.

It carries out the reaction RNA(n) + a ribonucleoside 5'-triphosphate = RNA(n+1) + diphosphate. In terms of biological role, DNA-dependent RNA polymerase catalyzes the transcription of DNA into RNA using the four ribonucleoside triphosphates as substrates. In Bartonella bacilliformis (strain ATCC 35685 / KC583 / Herrer 020/F12,63), this protein is DNA-directed RNA polymerase subunit beta.